Here is an 889-residue protein sequence, read N- to C-terminus: Translation initiation factor IF-2 (889 aa).

Disordered stretches follow at residues 47 to 85 and 206 to 302; these read GHLKKQHGDESEAKPNKLTLNRKTKSTLTMGHGSKAKSV and AEAA…FTKP. 3 stretches are compositionally biased toward basic and acidic residues: residues 52–61, 214–241, and 252–263; these read QHGDESEAKP, AAKKLAEENEGRWKEQEAERKAKEKEVV, and AEDKSDSADESG. Residues 389–558 enclose the tr-type G domain; the sequence is TRAPVVTIMG…LLQSEVLELT (170 aa). Residues 398–405 are G1; sequence GHVDHGKT. 398–405 serves as a coordination point for GTP; the sequence is GHVDHGKT. The interval 423–427 is G2; sequence GITQH. The tract at residues 444 to 447 is G3; sequence DTPG. GTP contacts are provided by residues 444-448 and 498-501; these read DTPGH and NKMD. Residues 498–501 form a G4 region; sequence NKMD. The tract at residues 534-536 is G5; it reads SAK.

The protein belongs to the TRAFAC class translation factor GTPase superfamily. Classic translation factor GTPase family. IF-2 subfamily.

Its subcellular location is the cytoplasm. One of the essential components for the initiation of protein synthesis. Protects formylmethionyl-tRNA from spontaneous hydrolysis and promotes its binding to the 30S ribosomal subunits. Also involved in the hydrolysis of GTP during the formation of the 70S ribosomal complex. This is Translation initiation factor IF-2 from Colwellia psychrerythraea (strain 34H / ATCC BAA-681) (Vibrio psychroerythus).